The following is a 231-amino-acid chain: Dephospho-CoA kinase (231 aa).

The DPCK domain occupies 29 to 231 (RVGLTGGIAS…IAGALRFDRR (203 aa)). 37–42 (ASGKST) contacts ATP.

It belongs to the CoaE family.

The protein resides in the cytoplasm. It catalyses the reaction 3'-dephospho-CoA + ATP = ADP + CoA + H(+). The protein operates within cofactor biosynthesis; coenzyme A biosynthesis; CoA from (R)-pantothenate: step 5/5. Catalyzes the phosphorylation of the 3'-hydroxyl group of dephosphocoenzyme A to form coenzyme A. The sequence is that of Dephospho-CoA kinase from Cutibacterium acnes (strain DSM 16379 / KPA171202) (Propionibacterium acnes).